The sequence spans 244 residues: Neurogenin-1 (244 aa).

Disordered regions lie at residues 1 to 27 and 39 to 82; these read MPAPLETCISDLDCSSSNSSSDLSSFL and LAST…ARVR. Low complexity predominate over residues 10–27; the sequence is SDLDCSSSNSSSDLSSFL. One can recognise a bHLH domain in the interval 93–145; the sequence is SRRVKANDRERNRMHNLNAALDALRSVLPSFPDDTKLTKIETLRFAYNYIWAL.

In terms of assembly, efficient DNA binding requires dimerization with another bHLH protein. Expression restricted to the embryonic nervous system.

It is found in the nucleus. Its function is as follows. Acts as a transcriptional regulator. Involved in the initiation of neuronal differentiation. Activates transcription by binding to the E box (5'-CANNTG-3'). Associates with chromatin to enhancer regulatory elements in genes encoding key transcriptional regulators of neurogenesis. The protein is Neurogenin-1 (Neurog1) of Mus musculus (Mouse).